We begin with the raw amino-acid sequence, 101 residues long: Thylakoid-associated protein slr0729 (101 aa).

The protein resides in the cellular thylakoid membrane. This is Thylakoid-associated protein slr0729 from Synechocystis sp. (strain ATCC 27184 / PCC 6803 / Kazusa).